We begin with the raw amino-acid sequence, 930 residues long: Nonribosomal peptide synthetase acyN (930 aa).

Residues 15-436 (LDPQDNKISV…AGRAKETIIV (422 aa)) are adenylation (A) domain. One can recognise a Carrier domain in the interval 567 to 646 (APSNETEATI…GLAGTLETLM (80 aa)). Position 604 is an O-(pantetheine 4'-phosphoryl)serine (Ser-604). The tract at residues 665 to 914 (PLWLVHPGVG…HYTMLGPDNI (250 aa)) is thioesterase (TE) domain.

The protein belongs to the NRP synthetase family.

The enzyme catalyses 2 3-phenylpyruvate + 2 ATP = polyporic acid + 2 AMP + 2 diphosphate + H(+). The protein operates within secondary metabolite biosynthesis. Its activity is regulated as follows. Hydroxyphenylpyruvate acts more like a competitive inhibitor rather than a substrate. In terms of biological role, nonribosomal peptide synthetase that mediates the biosynthesis of polyporic acid via the condensation of 2 phenylpyruvate units. Polyporic acid is further hydroxylaed by the cytochrome P450 monooxygenase MO6277 into less toxic ascocorynin. This Ascocoryne sarcoides (Purple jellydisc fungus) protein is Nonribosomal peptide synthetase acyN.